The primary structure comprises 447 residues: Probable glycosyltransferase 7 (447 aa).

The disordered stretch occupies residues 1–31 (MRATTGARHLHPPWRRGLRHHRQSTMPPRAS). At 1-37 (MRATTGARHLHPPWRRGLRHHRQSTMPPRASRGRLAD) the chain is on the cytoplasmic side. The span at 8-23 (RHLHPPWRRGLRHHRQ) shows a compositional bias: basic residues. Residues 38–60 (AALFTAGAVLGSVLLLTLASPFS) form a helical; Signal-anchor for type II membrane protein membrane-spanning segment. At 61 to 447 (SSSSPSSGVG…LPFDHPTQTA (387 aa)) the chain is on the lumenal side. N-linked (GlcNAc...) asparagine glycans are attached at residues N285 and N329.

Belongs to the glycosyltransferase 34 family.

It localises to the golgi apparatus membrane. Probable glycosyltransferase that may be involved in the biosynthesis of xyloglucan. This chain is Probable glycosyltransferase 7, found in Oryza sativa subsp. indica (Rice).